The primary structure comprises 121 residues: MARIAGVNVPNHQHTVIGLTAIYGIGRPRSQKICDTAGVPTTKKVKDLDDNELEKLRDEIAKFIVEGDLRRELSMNIKRLMDLGCYRGMRHRKGLPCRGQRTRTNARTRKGPRKAAQSLKK.

The disordered stretch occupies residues 92–121 (RKGLPCRGQRTRTNARTRKGPRKAAQSLKK).

The protein belongs to the universal ribosomal protein uS13 family. Part of the 30S ribosomal subunit. Forms a loose heterodimer with protein S19. Forms two bridges to the 50S subunit in the 70S ribosome.

Its function is as follows. Located at the top of the head of the 30S subunit, it contacts several helices of the 16S rRNA. In the 70S ribosome it contacts the 23S rRNA (bridge B1a) and protein L5 of the 50S subunit (bridge B1b), connecting the 2 subunits; these bridges are implicated in subunit movement. Contacts the tRNAs in the A and P-sites. The protein is Small ribosomal subunit protein uS13 of Janthinobacterium sp. (strain Marseille) (Minibacterium massiliensis).